The primary structure comprises 539 residues: Tyrosine-protein kinase csk-1 (539 aa).

In terms of domain architecture, SH3 spans 43 to 110 (SPGNDVIVTR…HADCVVRING (68 aa)). The disordered stretch occupies residues 129–148 (PGAASTTSSTSSHHSTAANH). The span at 131–146 (AASTTSSTSSHHSTAA) shows a compositional bias: low complexity. The SH2 domain occupies 151 to 241 (WFHSMISREN…GLCHRLVTPI (91 aa)). The Protein kinase domain occupies 283 to 535 (IDVGDTIGHG…GQVLQRLTTI (253 aa)). ATP contacts are provided by residues 289–297 (IGHGEFGDV) and K310. Residue D403 is the Proton acceptor of the active site.

It belongs to the protein kinase superfamily. Tyr protein kinase family. CSK subfamily. Mg(2+) is required as a cofactor. Requires Mn(2+) as cofactor. In terms of tissue distribution, expressed predominantly in pharyngeal muscles in procorpus, metacorpus and terminal bulb. Expressed also in some neurons (ASE, ADF, AVA, AUA, RMDV and BAG) in the head region, anchor cell, vulva, cells around anus, body wall muscle and gondal distal tip cells.

The catalysed reaction is L-tyrosyl-[protein] + ATP = O-phospho-L-tyrosyl-[protein] + ADP + H(+). Non-receptor tyrosine-protein kinase which plays a role in pharynx function by regulating pumping and the orientation of pharyngeal muscle fibers, independently of src-1 and src-2. May phosphorylate and thereby negatively regulate src-1 and src-2 activities. This chain is Tyrosine-protein kinase csk-1, found in Caenorhabditis elegans.